The sequence spans 65 residues: Small ribosomal subunit protein bS21 (65 aa).

This sequence belongs to the bacterial ribosomal protein bS21 family.

The polypeptide is Small ribosomal subunit protein bS21 (Chlorobaculum parvum (strain DSM 263 / NCIMB 8327) (Chlorobium vibrioforme subsp. thiosulfatophilum)).